We begin with the raw amino-acid sequence, 224 residues long: BTB/POZ domain-containing protein At5g48510 (224 aa).

The BTB domain maps to 24–98; the sequence is VDVMLKAKNS…ICSDGSMLSA (75 aa).

Interacts with CUL3A.

It participates in protein modification; protein ubiquitination. Functionally, may act as a substrate-specific adapter of an E3 ubiquitin-protein ligase complex (CUL3-RBX1-BTB) which mediates the ubiquitination and subsequent proteasomal degradation of target proteins. The chain is BTB/POZ domain-containing protein At5g48510 from Arabidopsis thaliana (Mouse-ear cress).